We begin with the raw amino-acid sequence, 359 residues long: DNA replication and repair protein RecF (359 aa).

30–37 (GPNGSGKT) is an ATP binding site.

The protein belongs to the RecF family.

It localises to the cytoplasm. In terms of biological role, the RecF protein is involved in DNA metabolism; it is required for DNA replication and normal SOS inducibility. RecF binds preferentially to single-stranded, linear DNA. It also seems to bind ATP. The polypeptide is DNA replication and repair protein RecF (Vibrio vulnificus (strain CMCP6)).